The primary structure comprises 169 residues: Vimentin-type intermediate filament-associated coiled-coil protein (169 aa).

Positions 7–89 form a coiled coil; it reads LQIREANAHL…VHSLQATVHQ (83 aa). Over residues 126–135 the composition is skewed to low complexity; sequence RLGPLPASDP. The interval 126 to 169 is disordered; it reads RLGPLPASDPGHPPPGGPGPPLDNSTGEEADRDHLQPAVFGTTV. A compositionally biased stretch (pro residues) spans 136–146; it reads GHPPPGGPGPP.

The protein resides in the cytoplasm. In Homo sapiens (Human), this protein is Vimentin-type intermediate filament-associated coiled-coil protein (VMAC).